The following is a 362-amino-acid chain: Dihydroorotate dehydrogenase (quinone) (362 aa).

Residues 62–66 (AGYDK) and Thr-86 contribute to the FMN site. Lys-66 is a binding site for substrate. 111–115 (NRLGF) provides a ligand contact to substrate. Residues Asn-139 and Asn-170 each coordinate FMN. Asn-170 contacts substrate. Ser-173 acts as the Nucleophile in catalysis. Asn-175 is a substrate binding site. FMN is bound by residues Lys-215 and Ser-243. 244 to 245 (NT) is a substrate binding site. FMN is bound by residues Gly-266, Gly-295, and 316–317 (YS).

The protein belongs to the dihydroorotate dehydrogenase family. Type 2 subfamily. As to quaternary structure, monomer. FMN serves as cofactor.

Its subcellular location is the cell membrane. It catalyses the reaction (S)-dihydroorotate + a quinone = orotate + a quinol. It functions in the pathway pyrimidine metabolism; UMP biosynthesis via de novo pathway; orotate from (S)-dihydroorotate (quinone route): step 1/1. In terms of biological role, catalyzes the conversion of dihydroorotate to orotate with quinone as electron acceptor. The sequence is that of Dihydroorotate dehydrogenase (quinone) from Rhizobium johnstonii (strain DSM 114642 / LMG 32736 / 3841) (Rhizobium leguminosarum bv. viciae).